Reading from the N-terminus, the 225-residue chain is Membrane protein (225 aa).

Residues 1–20 lie on the Virion surface side of the membrane; the sequence is MPNETNCTLDFEQSVQLFKE. Residues 21-41 traverse the membrane as a helical segment; that stretch reads YNLFITAFLLFLTIILQYGYA. The Intravirion segment spans residues 42–51; it reads TRTKVIYTLK. Residues 52–72 traverse the membrane as a helical segment; sequence MIVLWCFWPLNIAVGVISCTY. Residues 73–77 lie on the Virion surface side of the membrane; the sequence is PPNTG. Residues 78–98 traverse the membrane as a helical segment; sequence GLVVAIILTVFACLSFVGYWI. The Intravirion portion of the chain corresponds to 99-225; that stretch reads QSIRLFKRCR…VATGGSSLYT (127 aa).

This sequence belongs to the gammacoronaviruses M protein family. Homomultimer. Interacts with envelope E protein in the budding compartment of the host cell, which is located between endoplasmic reticulum and the Golgi complex. Forms a complex with HE and S proteins. Interacts with nucleocapsid N protein. This interaction probably participates in RNA packaging into the virus.

It is found in the virion membrane. It localises to the host Golgi apparatus membrane. Functionally, component of the viral envelope that plays a central role in virus morphogenesis and assembly via its interactions with other viral proteins. In Avian infectious bronchitis virus (strain Beaudette US) (IBV), this protein is Membrane protein.